The sequence spans 232 residues: Large ribosomal subunit protein uL1 (232 aa).

It belongs to the universal ribosomal protein uL1 family. Part of the 50S ribosomal subunit.

Binds directly to 23S rRNA. The L1 stalk is quite mobile in the ribosome, and is involved in E site tRNA release. In terms of biological role, protein L1 is also a translational repressor protein, it controls the translation of the L11 operon by binding to its mRNA. The protein is Large ribosomal subunit protein uL1 of Pelotomaculum thermopropionicum (strain DSM 13744 / JCM 10971 / SI).